Here is a 209-residue protein sequence, read N- to C-terminus: Ribonuclease HII (209 aa).

The RNase H type-2 domain occupies 20-209 (QLEIGIDEVG…KSFLTKLNLI (190 aa)). A divalent metal cation-binding residues include D26, E27, and D122.

The protein belongs to the RNase HII family. Requires Mn(2+) as cofactor. Mg(2+) is required as a cofactor.

The protein localises to the cytoplasm. The catalysed reaction is Endonucleolytic cleavage to 5'-phosphomonoester.. Endonuclease that specifically degrades the RNA of RNA-DNA hybrids. The sequence is that of Ribonuclease HII from Prochlorococcus marinus (strain MIT 9515).